The sequence spans 125 residues: Large ribosomal subunit protein bL19 (125 aa).

This sequence belongs to the bacterial ribosomal protein bL19 family.

Its function is as follows. This protein is located at the 30S-50S ribosomal subunit interface and may play a role in the structure and function of the aminoacyl-tRNA binding site. The chain is Large ribosomal subunit protein bL19 from Wolbachia pipientis subsp. Culex pipiens (strain wPip).